The chain runs to 341 residues: Protein pelota homolog (341 aa).

This sequence belongs to the eukaryotic release factor 1 family. Pelota subfamily. Monomer. Requires a divalent metal cation as cofactor.

It localises to the cytoplasm. May function in recognizing stalled ribosomes, interact with stem-loop structures in stalled mRNA molecules, and effect endonucleolytic cleavage of the mRNA. May play a role in the release non-functional ribosomes and degradation of damaged mRNAs. Has endoribonuclease activity. This is Protein pelota homolog from Methanoregula boonei (strain DSM 21154 / JCM 14090 / 6A8).